The following is a 351-amino-acid chain: F-box protein At1g47810 (351 aa).

In terms of domain architecture, F-box spans 8–54 (LQSLDPIPVDVLFEIFLNLPAKFLARFVCVSKLWAKIIRNQDFIRSF).

This is F-box protein At1g47810 from Arabidopsis thaliana (Mouse-ear cress).